Consider the following 510-residue polypeptide: Calmodulin-binding receptor-like cytoplasmic kinase 3 (510 aa).

An N-terminal signal peptide occupies residues 1-30; sequence MGGDDLSFTRLVITALFGLLMLLQIKETSA. The span at 166–178 shows a compositional bias: polar residues; it reads VSSFEMSPSSEKI. A disordered region spans residues 166 to 209; it reads VSSFEMSPSSEKIPQSPFRAPPSPSRVPQSPSRYAMSPRPSRLG. The residue at position 214 (Thr-214) is a Phosphothreonine. In terms of domain architecture, Protein kinase spans 225–499; the sequence is FADSHQIGEG…MEAVGKQLWA (275 aa). Residues 231–239 and Lys-253 contribute to the ATP site; that span reads IGEGGFGVV. Residues 240–265 form a caM-binding region; it reads FKGVLDDGQVVAIKRAKKEHFENLRT. Residue Asp-350 is the Proton acceptor of the active site. Phosphoserine is present on Ser-354. Thr-386 and Thr-391 each carry phosphothreonine. Tyr-399 carries the phosphotyrosine modification.

This sequence belongs to the protein kinase superfamily. Ser/Thr protein kinase family. In terms of assembly, interacts with calmodulin (CaM) in a Ca(2+)-dependent manner.

The protein resides in the cytoplasm. It catalyses the reaction L-seryl-[protein] + ATP = O-phospho-L-seryl-[protein] + ADP + H(+). The enzyme catalyses L-threonyl-[protein] + ATP = O-phospho-L-threonyl-[protein] + ADP + H(+). This chain is Calmodulin-binding receptor-like cytoplasmic kinase 3 (CRCK3), found in Arabidopsis thaliana (Mouse-ear cress).